Reading from the N-terminus, the 1115-residue chain is DNA-directed RNA polymerase subunit beta (1115 aa).

The interval 1084-1115 is disordered; sequence HEAGEGEDDEYFEEDEEAVDDEPMTFDDDDME. Over residues 1088-1115 the composition is skewed to acidic residues; that stretch reads EGEDDEYFEEDEEAVDDEPMTFDDDDME.

This sequence belongs to the RNA polymerase beta chain family. As to quaternary structure, the RNAP catalytic core consists of 2 alpha, 1 beta, 1 beta' and 1 omega subunit. When a sigma factor is associated with the core the holoenzyme is formed, which can initiate transcription.

The catalysed reaction is RNA(n) + a ribonucleoside 5'-triphosphate = RNA(n+1) + diphosphate. DNA-dependent RNA polymerase catalyzes the transcription of DNA into RNA using the four ribonucleoside triphosphates as substrates. In Desulfitobacterium hafniense (strain DSM 10664 / DCB-2), this protein is DNA-directed RNA polymerase subunit beta.